The chain runs to 252 residues: uncharacterized protein (252 aa).

10 repeat units span residues 68 to 82 (TYNQ…DLVD), 83 to 97 (TYNQ…DLVD), 98 to 112 (TYNQ…DLVD), 113 to 127 (TYNQ…DLVD), 128 to 142 (TYNQ…DLVD), 143 to 157 (TYNQ…DLVD), 158 to 172 (TYNQ…DLID), 173 to 187 (TYNQ…DLVD), 188 to 202 (TYNQ…DLVD), and 203 to 217 (TYNQ…DLVD). The interval 68–246 (TYNQSQNVCP…LIDTYNQSQN (179 aa)) is 13 X 15 AA tandem repeats. One copy of the 11; truncated repeat lies at 218-230 (TYNQSQNVCPQDL). Residues 231–239 (NVYTQDLID) form a 12; truncated repeat. Residues 240-246 (TYNQSQN) form a 13; truncated repeat.

In terms of biological role, a protein probably derived from this gene is found in cuboidal crystalline inclusions, but is not toxic even when coexpressed with upstream ORF1. The protein runs anomalously as a 50 kDa band in gels. This is an uncharacterized protein from Bacillus thuringiensis subsp. kurstaki.